Here is a 210-residue protein sequence, read N- to C-terminus: Somatotropin-1 (210 aa).

Residues 1-22 (MARALVLLSVVLVSLLVNQGRA) form the signal peptide. Zn(2+) is bound at residue His-38. Cys-71 and Cys-183 are joined by a disulfide. Residue Glu-192 participates in Zn(2+) binding. The cysteines at positions 200 and 208 are disulfide-linked.

Belongs to the somatotropin/prolactin family.

The protein resides in the secreted. Its function is as follows. Growth hormone plays an important role in growth control and is involved in the regulation of several anabolic processes. Implicated as an osmoregulatory substance important for seawater adaptation. The sequence is that of Somatotropin-1 (gh1) from Carassius auratus (Goldfish).